The sequence spans 104 residues: Small ribosomal subunit protein uS10 (104 aa).

Belongs to the universal ribosomal protein uS10 family. As to quaternary structure, part of the 30S ribosomal subunit.

Involved in the binding of tRNA to the ribosomes. This Nitrosococcus oceani (strain ATCC 19707 / BCRC 17464 / JCM 30415 / NCIMB 11848 / C-107) protein is Small ribosomal subunit protein uS10.